The chain runs to 574 residues: Isocitrate dehydrogenase kinase/phosphatase (574 aa).

ATP is bound by residues 315-321 and lysine 336; that span reads APGIRGM. Aspartate 371 is a catalytic residue.

It belongs to the AceK family.

It is found in the cytoplasm. The enzyme catalyses L-seryl-[isocitrate dehydrogenase] + ATP = O-phospho-L-seryl-[isocitrate dehydrogenase] + ADP + H(+). Its function is as follows. Bifunctional enzyme which can phosphorylate or dephosphorylate isocitrate dehydrogenase (IDH) on a specific serine residue. This is a regulatory mechanism which enables bacteria to bypass the Krebs cycle via the glyoxylate shunt in response to the source of carbon. When bacteria are grown on glucose, IDH is fully active and unphosphorylated, but when grown on acetate or ethanol, the activity of IDH declines drastically concomitant with its phosphorylation. The chain is Isocitrate dehydrogenase kinase/phosphatase from Escherichia coli O81 (strain ED1a).